We begin with the raw amino-acid sequence, 328 residues long: Sterol-4-alpha-carboxylate 3-dehydrogenase, decarboxylating (328 aa).

Catalysis depends on Tyr145, which acts as the Proton acceptor. An NAD(+)-binding site is contributed by Lys149. The helical transmembrane segment at 259–279 (LHMVLPTPIALSLVWIMALIW) threads the bilayer.

The protein belongs to the 3-beta-HSD family. Homodimer.

It localises to the endoplasmic reticulum membrane. Its subcellular location is the lipid droplet. The enzyme catalyses a 3beta-hydroxysteroid-4alpha-carboxylate + NADP(+) = a 3-oxosteroid + CO2 + NADPH. It catalyses the reaction a 3beta-hydroxysteroid-4alpha-carboxylate + NAD(+) = a 3-oxosteroid + CO2 + NADH. The protein operates within steroid biosynthesis; zymosterol biosynthesis; zymosterol from lanosterol: step 4/6. Its function is as follows. Catalyzes the NAD(P)(+)-dependent oxidative decarboxylation of the C4 methyl groups of 4-alpha-carboxysterols in post-squalene cholesterol biosynthesis. In Dictyostelium discoideum (Social amoeba), this protein is Sterol-4-alpha-carboxylate 3-dehydrogenase, decarboxylating (nsdhl).